We begin with the raw amino-acid sequence, 26 residues long: ATP synthase subunit gamma, mitochondrial (26 aa).

Belongs to the ATPase gamma chain family. In terms of assembly, F-type ATPases have 2 components, CF(1) - the catalytic core - and CF(0) - the membrane proton channel. CF(1) has five subunits: alpha(3), beta(3), gamma(1), delta(1), epsilon(1). CF(0) has three main subunits: a, b and c.

It localises to the mitochondrion. Its subcellular location is the mitochondrion inner membrane. Its function is as follows. Mitochondrial membrane ATP synthase (F(1)F(0) ATP synthase or Complex V) produces ATP from ADP in the presence of a proton gradient across the membrane which is generated by electron transport complexes of the respiratory chain. F-type ATPases consist of two structural domains, F(1) - containing the extramembraneous catalytic core, and F(0) - containing the membrane proton channel, linked together by a central stalk and a peripheral stalk. During catalysis, ATP synthesis in the catalytic domain of F(1) is coupled via a rotary mechanism of the central stalk subunits to proton translocation. Part of the complex F(1) domain and the central stalk which is part of the complex rotary element. The gamma subunit protrudes into the catalytic domain formed of alpha(3)beta(3). Rotation of the central stalk against the surrounding alpha(3)beta(3) subunits leads to hydrolysis of ATP in three separate catalytic sites on the beta subunits. The protein is ATP synthase subunit gamma, mitochondrial (ATPC) of Spinacia oleracea (Spinach).